A 346-amino-acid chain; its full sequence is 3',5'-cyclic-nucleotide phosphodiesterase (346 aa).

The protein belongs to the cyclic nucleotide phosphodiesterase class-II family.

It catalyses the reaction a nucleoside 3',5'-cyclic phosphate + H2O = a nucleoside 5'-phosphate + H(+). In Schizosaccharomyces pombe (strain 972 / ATCC 24843) (Fission yeast), this protein is 3',5'-cyclic-nucleotide phosphodiesterase (cgs2).